A 176-amino-acid polypeptide reads, in one-letter code: Ribosome rescue factor SmrB (176 aa).

The region spanning 97 to 172 is the Smr domain; sequence LDMHGMTQQE…GDGALLVLLS (76 aa).

The protein belongs to the SmrB family. In terms of assembly, associates with collided ribosomes, but not with correctly translating polysomes.

Functionally, acts as a ribosome collision sensor. Detects stalled/collided disomes (pairs of ribosomes where the leading ribosome is stalled and a second ribosome has collided with it) and endonucleolytically cleaves mRNA at the 5' boundary of the stalled ribosome. Stalled/collided disomes form a new interface (primarily via the 30S subunits) that binds SmrB. Cleaved mRNA becomes available for tmRNA ligation, leading to ribosomal subunit dissociation and rescue of stalled ribosomes. This is Ribosome rescue factor SmrB from Vibrio campbellii (strain ATCC BAA-1116).